The primary structure comprises 150 residues: Large ribosomal subunit protein bL9 (150 aa).

Belongs to the bacterial ribosomal protein bL9 family.

Its function is as follows. Binds to the 23S rRNA. The polypeptide is Large ribosomal subunit protein bL9 (Hydrogenovibrio crunogenus (strain DSM 25203 / XCL-2) (Thiomicrospira crunogena)).